Consider the following 127-residue polypeptide: Aspartate 1-decarboxylase (127 aa).

Serine 25 functions as the Schiff-base intermediate with substrate; via pyruvic acid in the catalytic mechanism. Serine 25 is modified (pyruvic acid (Ser)). Threonine 57 serves as a coordination point for substrate. The active-site Proton donor is tyrosine 58. Residue 73–75 (GAA) participates in substrate binding.

Belongs to the PanD family. As to quaternary structure, heterooctamer of four alpha and four beta subunits. Pyruvate is required as a cofactor. Is synthesized initially as an inactive proenzyme, which is activated by self-cleavage at a specific serine bond to produce a beta-subunit with a hydroxyl group at its C-terminus and an alpha-subunit with a pyruvoyl group at its N-terminus.

The protein resides in the cytoplasm. The enzyme catalyses L-aspartate + H(+) = beta-alanine + CO2. Its pathway is cofactor biosynthesis; (R)-pantothenate biosynthesis; beta-alanine from L-aspartate: step 1/1. Catalyzes the pyruvoyl-dependent decarboxylation of aspartate to produce beta-alanine. This Exiguobacterium sibiricum (strain DSM 17290 / CCUG 55495 / CIP 109462 / JCM 13490 / 255-15) protein is Aspartate 1-decarboxylase.